Here is a 200-residue protein sequence, read N- to C-terminus: Large ribosomal subunit protein uL4 (200 aa).

A disordered region spans residues 43-71; sequence RAQKTRAEVSGSGKKPWRQKGTGRARSGD.

The protein belongs to the universal ribosomal protein uL4 family. In terms of assembly, part of the 50S ribosomal subunit.

Its function is as follows. One of the primary rRNA binding proteins, this protein initially binds near the 5'-end of the 23S rRNA. It is important during the early stages of 50S assembly. It makes multiple contacts with different domains of the 23S rRNA in the assembled 50S subunit and ribosome. In terms of biological role, forms part of the polypeptide exit tunnel. This Pasteurella multocida (strain Pm70) protein is Large ribosomal subunit protein uL4.